Consider the following 62-residue polypeptide: Guanine nucleotide-binding protein subunit gamma (62 aa).

Cysteine 59 is modified (cysteine methyl ester). A lipid anchor (S-geranylgeranyl cysteine) is attached at cysteine 59. A propeptide spans 60-62 (removed in mature form); that stretch reads SVL.

This sequence belongs to the G protein gamma family. G proteins are composed of 3 units, alpha, beta and gamma. Interacts with gpb-1 and gpb-2.

It localises to the cell membrane. Its function is as follows. Guanine nucleotide-binding proteins (G proteins) are involved as a modulator or transducer in various transmembrane signaling systems. The beta and gamma chains are required for the GTPase activity, for replacement of GDP by GTP, and for G protein-effector interaction. The protein is Guanine nucleotide-binding protein subunit gamma (gpc-1) of Caenorhabditis briggsae.